The following is a 394-amino-acid chain: Chalcone synthase 2 (394 aa).

The active site involves Cys-167.

Belongs to the thiolase-like superfamily. Chalcone/stilbene synthases family.

The catalysed reaction is (E)-4-coumaroyl-CoA + 3 malonyl-CoA + 3 H(+) = 2',4,4',6'-tetrahydroxychalcone + 3 CO2 + 4 CoA. The protein operates within secondary metabolite biosynthesis; flavonoid biosynthesis. The primary product of this enzyme is 4,2',4',6'-tetrahydroxychalcone (also termed naringenin-chalcone or chalcone) which can under specific conditions spontaneously isomerize into naringenin. The polypeptide is Chalcone synthase 2 (CHS2) (Secale cereale (Rye)).